We begin with the raw amino-acid sequence, 356 residues long: GTPase HflX (356 aa).

Residues 180–356 (PSIGIVGYTN…KIYQLATQLS (177 aa)) form the Hflx-type G domain. GTP contacts are provided by residues 186-193 (GYTNSGKT), 211-215 (FTTMS), 232-235 (DTVG), 300-303 (NKID), and 334-336 (SAL). Mg(2+)-binding residues include T193 and T213.

Belongs to the TRAFAC class OBG-HflX-like GTPase superfamily. HflX GTPase family. Monomer. Associates with the 50S ribosomal subunit. Does not associate with 70S ribosomes. The cofactor is Mg(2+).

It localises to the cytoplasm. With respect to regulation, GTPase activity is stimulated by the presence of 50S ribosomal subunits. Hydrolysis is probably regulated by the HflX N-terminal domain. GTPase that associates with the 50S ribosomal subunit and may have a role during protein synthesis or ribosome biogenesis. Specific for GTP. The chain is GTPase HflX from Saccharolobus solfataricus (strain ATCC 35092 / DSM 1617 / JCM 11322 / P2) (Sulfolobus solfataricus).